A 185-amino-acid chain; its full sequence is CDP-diacylglycerol--glycerol-3-phosphate 3-phosphatidyltransferase (185 aa).

The next 4 helical transmembrane spans lie at 7-26 (IFLT…AFYL), 33-52 (FITT…DGYL), 89-108 (FWIT…ISAL), and 151-172 (IAAI…IQYL).

The protein belongs to the CDP-alcohol phosphatidyltransferase class-I family.

It is found in the cell membrane. It carries out the reaction a CDP-1,2-diacyl-sn-glycerol + sn-glycerol 3-phosphate = a 1,2-diacyl-sn-glycero-3-phospho-(1'-sn-glycero-3'-phosphate) + CMP + H(+). It functions in the pathway phospholipid metabolism; phosphatidylglycerol biosynthesis; phosphatidylglycerol from CDP-diacylglycerol: step 1/2. This protein catalyzes the committed step to the synthesis of the acidic phospholipids. This is CDP-diacylglycerol--glycerol-3-phosphate 3-phosphatidyltransferase (pgsA) from Haemophilus influenzae (strain ATCC 51907 / DSM 11121 / KW20 / Rd).